Here is a 360-residue protein sequence, read N- to C-terminus: Putative F-box protein At3g16210 (360 aa).

Residues M1 to M48 enclose the F-box domain.

This is Putative F-box protein At3g16210 from Arabidopsis thaliana (Mouse-ear cress).